A 208-amino-acid polypeptide reads, in one-letter code: Uracil phosphoribosyltransferase (208 aa).

5-phospho-alpha-D-ribose 1-diphosphate-binding positions include arginine 78, arginine 103, and 130–138; that span reads DPMLATGGT. Uracil contacts are provided by residues isoleucine 193 and 198–200; that span reads GDA. Residue aspartate 199 coordinates 5-phospho-alpha-D-ribose 1-diphosphate.

This sequence belongs to the UPRTase family. The cofactor is Mg(2+).

The enzyme catalyses UMP + diphosphate = 5-phospho-alpha-D-ribose 1-diphosphate + uracil. It participates in pyrimidine metabolism; UMP biosynthesis via salvage pathway; UMP from uracil: step 1/1. Its activity is regulated as follows. Allosterically activated by GTP. Its function is as follows. Catalyzes the conversion of uracil and 5-phospho-alpha-D-ribose 1-diphosphate (PRPP) to UMP and diphosphate. In Oleidesulfovibrio alaskensis (strain ATCC BAA-1058 / DSM 17464 / G20) (Desulfovibrio alaskensis), this protein is Uracil phosphoribosyltransferase.